The primary structure comprises 640 residues: SH3 domain-containing protein 21 (640 aa).

The segment at 1-60 (MVQSELQLQPRAGGRAEAASWGDRGNDKGGLGNPDMPSVSPGPQRPPKLSSLAYDSPPDY) is disordered. The SH3 domain occupies 65 to 126 (SHPEVYRVLF…PDNFVLPPPP (62 aa)). Disordered stretches follow at residues 133-361 (RKVV…PLGD), 401-551 (YFVA…PDSQ), and 618-640 (VQVMQGTQKSQTPRVIHTQTQTY). The span at 177-186 (PSRDSQKLTS) shows a compositional bias: basic and acidic residues. Polar residues predominate over residues 210-220 (TQTPQQRSVSS). Basic and acidic residues-rich tracts occupy residues 401 to 416 (YFVAKEDPSSQEEAHT), 459 to 469 (ALEKPHPHEEA), and 494 to 532 (RPLREEVLPKEGVASKEEVTLKEELPPKEEVAPKEEVPP). The stretch at 572–626 (VDVTSLRGEVESLRRALELMEVQLERKLTDIWEELKSEKEQRRRLEVQVMQGTQK) forms a coiled coil. The span at 621–640 (MQGTQKSQTPRVIHTQTQTY) shows a compositional bias: polar residues.

The chain is SH3 domain-containing protein 21 (SH3D21) from Homo sapiens (Human).